Reading from the N-terminus, the 929-residue chain is Facilitated trehalose transporter Tret1 (929 aa).

The disordered stretch occupies residues 1-275 (MSGRDNRAAG…VGYQQQKATS (275 aa)). The Cytoplasmic segment spans residues 1-462 (MSGRDNRAAG…LEVYRPTTNP (462 aa)). Residues 10 to 26 (GAGGGSGGGGGGGGGGG) are compositionally biased toward gly residues. A compositionally biased stretch (basic and acidic residues) spans 41–59 (KLKEKLTRAGEELGYHRVE). A compositionally biased stretch (polar residues) spans 60-72 (SNLSASNTATSLD). Composition is skewed to low complexity over residues 85–141 (AAPQ…QPLR), 168–178 (QEIQQQQLQQQ), and 237–254 (SNSN…VAAD). 3 positions are modified to phosphoserine: Ser320, Ser321, and Ser322. The tract at residues 352-371 (VLHGSSTDSDEEGEDAEHKR) is disordered. A phosphoserine mark is found at Ser392 and Ser394. The tract at residues 398–420 (FLSSRQNFQQQRSISTDSRKSRR) is disordered. A compositionally biased stretch (polar residues) spans 402-413 (RQNFQQQRSIST). Residues 463–483 (IYIWTQVLAALSVSLGSLVVG) form a helical membrane-spanning segment. Over 484 to 512 (FSSAYTSPALVSMTDRNLTSFDVSTEDAS) the chain is Extracellular. An N-linked (GlcNAc...) asparagine glycan is attached at Asn500. A helical membrane pass occupies residues 513-533 (WVGGIMPLAGLAGGIAGGPLI). Topologically, residues 534–541 (EYLGRRNT) are cytoplasmic. Residues 542-562 (ILATAVPFIISWLLIACAVNV) traverse the membrane as a helical segment. At 563–569 (PMVLSGR) the chain is on the extracellular side. A helical transmembrane segment spans residues 570 to 590 (FLAGFCVGIASLSLPVYLGET). Residues 591–596 (VQPEVR) are Cytoplasmic-facing. The helical transmembrane segment at 597–617 (GTLGLLPTAFGNIGILLCFIA) threads the bilayer. Topologically, residues 618 to 624 (GTYMDWS) are extracellular. Residues 625–645 (MLAFLGGALPVPFLILMFLIP) traverse the membrane as a helical segment. Residues 646–708 (ETPRWYVSRG…ELLKRSNLKP (63 aa)) lie on the Cytoplasmic side of the membrane. The chain crosses the membrane as a helical span at residues 709–729 (LSISLGLMFFQQLSGINAVIF). At 730-745 (YTVQIFKDAGSTLDGN) the chain is on the extracellular side. A helical membrane pass occupies residues 746-766 (VCTIIVGTVNFIATFIGILLI). The Cytoplasmic portion of the chain corresponds to 767 to 772 (DRAGRK). A helical transmembrane segment spans residues 773-793 (ILLYVSNIAMILTLFVLGGFF). Residues 794–804 (YCKANGMDVSN) are Extracellular-facing. A helical transmembrane segment spans residues 805–825 (VGLLPLCCFVVYILGFSLGFG). Residues 826 to 839 (PIPWLMMGEILPAK) are Cytoplasmic-facing. Residues 840–860 (IRGSAASVATAFNWTCTFVVT) traverse the membrane as a helical segment. Topologically, residues 861–873 (KSFLDMIKLIGAH) are extracellular. Residues 874–894 (GAFWLFGVICCIGMFFVIFCV) form a helical membrane-spanning segment. At 895-929 (PETQGKTLEDIERKMMGRVRRMSSVANIKPLSFNM) the chain is on the cytoplasmic side. Phosphoserine is present on residues Ser917 and Ser918.

This sequence belongs to the major facilitator superfamily. Sugar transporter (TC 2.A.1.1) family. Trehalose transporter subfamily.

It localises to the cell membrane. Its function is as follows. Low-capacity facilitative transporter for trehalose. Does not transport maltose, sucrose or lactose. Mediates the bidirectional transfer of trehalose. Responsible for the transport of trehalose synthesized in the fat body and the incorporation of trehalose into other tissues that require a carbon source, thereby regulating trehalose levels in the hemolymph. The sequence is that of Facilitated trehalose transporter Tret1 from Drosophila grimshawi (Hawaiian fruit fly).